A 326-amino-acid polypeptide reads, in one-letter code: ELAV-like protein 1 (326 aa).

RRM domains lie at 20-98 (TNLI…VARP), 106-186 (ANLY…FAAN), and 244-322 (WCIF…FKTS).

The protein belongs to the RRM elav family. Interacts (via RRM3) with cirbp. Unable to form oligomers. Part of a ribonucleoprotein (RNP) complex, at least composed of elavl1/elrA and/or elavl2/elrB, igf2bp3/vg1RBP, ddx6/Xp54, ybx2/frgy2, lsm14b/rap55b and, in a subset of RNP complexes, stau1/staufen.

It is found in the cytoplasm. Its subcellular location is the cell cortex. Functionally, RNA-binding protein that binds to the 3'-UTR region of mRNAs and increases their stability. Involved in embryonic stem cells (ESCs) differentiation: preferentially binds mRNAs that are not methylated by N6-methyladenosine (m6A), stabilizing them, promoting ESCs differentiation. Binds to poly-U elements and AU-rich elements (AREs) in the 3'-UTR of target mRNAs. Acts cooperatively with cribp to stabilize AU-rich sequence (ARE)-containing mRNAs. May play a role during gastrulation. Required for the vegetal localization of vg1 mRNA. The protein is ELAV-like protein 1 of Xenopus tropicalis (Western clawed frog).